The sequence spans 253 residues: Sulfur carrier protein FdhD (253 aa).

C100 serves as the catalytic Cysteine persulfide intermediate.

This sequence belongs to the FdhD family.

It is found in the cytoplasm. Functionally, required for formate dehydrogenase (FDH) activity. Acts as a sulfur carrier protein that transfers sulfur from IscS to the molybdenum cofactor prior to its insertion into FDH. The polypeptide is Sulfur carrier protein FdhD (Sulfolobus acidocaldarius (strain ATCC 33909 / DSM 639 / JCM 8929 / NBRC 15157 / NCIMB 11770)).